A 206-amino-acid chain; its full sequence is RNA pyrophosphohydrolase (206 aa).

The Nudix hydrolase domain maps to 6 to 150 (GYRPNVGIVI…KRDVYRKVMK (145 aa)). The Nudix box signature appears at 38–59 (GGINEGENIETAMYRELYEEVG). The segment covering 162–191 (KPETVEKPRVERTEKRDFQKRDNQKREFRK) has biased composition (basic and acidic residues). A disordered region spans residues 162–206 (KPETVEKPRVERTEKRDFQKRDNQKREFRKSARMWNNSHQKGKAQ).

The protein belongs to the Nudix hydrolase family. RppH subfamily. Requires a divalent metal cation as cofactor.

In terms of biological role, accelerates the degradation of transcripts by removing pyrophosphate from the 5'-end of triphosphorylated RNA, leading to a more labile monophosphorylated state that can stimulate subsequent ribonuclease cleavage. This chain is RNA pyrophosphohydrolase, found in Actinobacillus pleuropneumoniae serotype 7 (strain AP76).